The primary structure comprises 496 residues: NAD(P)H-quinone oxidoreductase subunit 2, chloroplastic (496 aa).

14 helical membrane-spanning segments follow: residues 14–34, 42–62, 79–99, 109–129, 133–153, 167–187, 210–230, 244–264, 281–301, 305–325, 334–354, 377–397, 400–420, and 469–489; these read SFLP…LDLV, MLVK…IQQW, FTTC…PLSF, LTEF…LSSA, ITIF…TGYV, LIIG…LYGL, LASW…LSLV, PTPV…ALTI, ILQI…MVET, RILT…IVAG, LVYM…IILF, ASCL…TGFF, ILLF…TGIF, and IYLC…VIYF.

Belongs to the complex I subunit 2 family. In terms of assembly, NDH is composed of at least 16 different subunits, 5 of which are encoded in the nucleus.

Its subcellular location is the plastid. The protein localises to the chloroplast thylakoid membrane. It catalyses the reaction a plastoquinone + NADH + (n+1) H(+)(in) = a plastoquinol + NAD(+) + n H(+)(out). The enzyme catalyses a plastoquinone + NADPH + (n+1) H(+)(in) = a plastoquinol + NADP(+) + n H(+)(out). Functionally, NDH shuttles electrons from NAD(P)H:plastoquinone, via FMN and iron-sulfur (Fe-S) centers, to quinones in the photosynthetic chain and possibly in a chloroplast respiratory chain. The immediate electron acceptor for the enzyme in this species is believed to be plastoquinone. Couples the redox reaction to proton translocation, and thus conserves the redox energy in a proton gradient. This Chara vulgaris (Common stonewort) protein is NAD(P)H-quinone oxidoreductase subunit 2, chloroplastic.